Consider the following 476-residue polypeptide: Aspartyl/glutamyl-tRNA(Asn/Gln) amidotransferase subunit B (476 aa).

Belongs to the GatB/GatE family. GatB subfamily. As to quaternary structure, heterotrimer of A, B and C subunits.

The catalysed reaction is L-glutamyl-tRNA(Gln) + L-glutamine + ATP + H2O = L-glutaminyl-tRNA(Gln) + L-glutamate + ADP + phosphate + H(+). It catalyses the reaction L-aspartyl-tRNA(Asn) + L-glutamine + ATP + H2O = L-asparaginyl-tRNA(Asn) + L-glutamate + ADP + phosphate + 2 H(+). Functionally, allows the formation of correctly charged Asn-tRNA(Asn) or Gln-tRNA(Gln) through the transamidation of misacylated Asp-tRNA(Asn) or Glu-tRNA(Gln) in organisms which lack either or both of asparaginyl-tRNA or glutaminyl-tRNA synthetases. The reaction takes place in the presence of glutamine and ATP through an activated phospho-Asp-tRNA(Asn) or phospho-Glu-tRNA(Gln). In Clostridium botulinum (strain Loch Maree / Type A3), this protein is Aspartyl/glutamyl-tRNA(Asn/Gln) amidotransferase subunit B.